The sequence spans 297 residues: Transmembrane protein 169 (297 aa).

Residues 1–85 (MEEPTAVEGQ…KEEEGDDFLD (85 aa)) form a disordered region. The Extracellular portion of the chain corresponds to 1-159 (MEEPTAVEGQ…CQMGADRGPH (159 aa)). The segment covering 61–85 (KTDEEPGESEGGDQPKEEEGDDFLD) has biased composition (acidic residues). The chain crosses the membrane as a helical span at residues 160–180 (VVLWTLICLPVVFILSFVVSF). At 181–210 (YYGTITWYNIFLVYNEERTFWHKISYCPCL) the chain is on the cytoplasmic side. A helical membrane pass occupies residues 211-231 (VLFYPVLIMAMASSLGLYAAV). Over 232–297 (VQLSWSWEAW…PIQEVETSTV (66 aa)) the chain is Extracellular.

The protein localises to the membrane. In Homo sapiens (Human), this protein is Transmembrane protein 169 (TMEM169).